Consider the following 406-residue polypeptide: Bifunctional protein GlmU (406 aa).

The segment at 1–221 is pyrophosphorylase; that stretch reads MFIILAAGHG…EEEATGINSR (221 aa). Residues 5 to 8, lysine 19, glutamine 68, 73 to 74, 98 to 100, glycine 134, glutamate 148, asparagine 162, and asparagine 219 each bind UDP-N-acetyl-alpha-D-glucosamine; these read LAAG, GT, and YGD. Mg(2+) is bound at residue aspartate 100. Asparagine 219 serves as a coordination point for Mg(2+). The linker stretch occupies residues 222–242; that stretch reads NDLAKAEFYFQENRRKFFTDS. The N-acetyltransferase stretch occupies residues 243–406; it reads GVTLVAPETV…RRKQMVKKIK (164 aa). Lysine 308 contacts UDP-N-acetyl-alpha-D-glucosamine. The Proton acceptor role is filled by histidine 320. Residues tyrosine 323 and asparagine 334 each contribute to the UDP-N-acetyl-alpha-D-glucosamine site. Residues alanine 337, 343 to 344, alanine 380, and arginine 397 contribute to the acetyl-CoA site; that span reads NY.

It in the N-terminal section; belongs to the N-acetylglucosamine-1-phosphate uridyltransferase family. In the C-terminal section; belongs to the transferase hexapeptide repeat family. In terms of assembly, homotrimer. It depends on Mg(2+) as a cofactor.

It localises to the cytoplasm. The catalysed reaction is alpha-D-glucosamine 1-phosphate + acetyl-CoA = N-acetyl-alpha-D-glucosamine 1-phosphate + CoA + H(+). The enzyme catalyses N-acetyl-alpha-D-glucosamine 1-phosphate + UTP + H(+) = UDP-N-acetyl-alpha-D-glucosamine + diphosphate. It functions in the pathway nucleotide-sugar biosynthesis; UDP-N-acetyl-alpha-D-glucosamine biosynthesis; N-acetyl-alpha-D-glucosamine 1-phosphate from alpha-D-glucosamine 6-phosphate (route II): step 2/2. It participates in nucleotide-sugar biosynthesis; UDP-N-acetyl-alpha-D-glucosamine biosynthesis; UDP-N-acetyl-alpha-D-glucosamine from N-acetyl-alpha-D-glucosamine 1-phosphate: step 1/1. The protein operates within bacterial outer membrane biogenesis; LPS lipid A biosynthesis. Functionally, catalyzes the last two sequential reactions in the de novo biosynthetic pathway for UDP-N-acetylglucosamine (UDP-GlcNAc). The C-terminal domain catalyzes the transfer of acetyl group from acetyl coenzyme A to glucosamine-1-phosphate (GlcN-1-P) to produce N-acetylglucosamine-1-phosphate (GlcNAc-1-P), which is converted into UDP-GlcNAc by the transfer of uridine 5-monophosphate (from uridine 5-triphosphate), a reaction catalyzed by the N-terminal domain. The protein is Bifunctional protein GlmU of Wolbachia sp. subsp. Brugia malayi (strain TRS).